Reading from the N-terminus, the 120-residue chain is MDQLIQLVEASEARNDFPAINPGDTVKIQLKVIEGEKERLQAFEGVVISDRGAGGSKTITVRKISHGVGVERIIPVNSPNIESITVLKHGKARRAKLFYLRKRTGKAALKVKARKVVEKA.

This sequence belongs to the bacterial ribosomal protein bL19 family.

Its function is as follows. This protein is located at the 30S-50S ribosomal subunit interface and may play a role in the structure and function of the aminoacyl-tRNA binding site. The polypeptide is Large ribosomal subunit protein bL19 (Chlorobium phaeobacteroides (strain DSM 266 / SMG 266 / 2430)).